The sequence spans 474 residues: Proline--tRNA ligase (474 aa).

Belongs to the class-II aminoacyl-tRNA synthetase family. ProS type 3 subfamily. As to quaternary structure, homodimer.

It is found in the cytoplasm. It carries out the reaction tRNA(Pro) + L-proline + ATP = L-prolyl-tRNA(Pro) + AMP + diphosphate. In terms of biological role, catalyzes the attachment of proline to tRNA(Pro) in a two-step reaction: proline is first activated by ATP to form Pro-AMP and then transferred to the acceptor end of tRNA(Pro). This Aster yellows witches'-broom phytoplasma (strain AYWB) protein is Proline--tRNA ligase.